A 416-amino-acid chain; its full sequence is Tumor necrosis factor receptor superfamily member 19 (416 aa).

The first 29 residues, 1–29 (MALKVLPLHRTVLFAAILFLLHLACKVSC), serve as a signal peptide directing secretion. The Extracellular segment spans residues 30 to 170 (ETGDCRQQEF…TVSSPRDTAL (141 aa)). TNFR-Cys repeat units follow at residues 33-72 (DCRQQEFKDRSGNCVLCKQCGPGMELSKECGFGYGEDAQC) and 74-114 (PCRP…DAVC). Intrachain disulfides connect C34/C46, C49/C62, C52/C72, C75/C89, C92/C106, C95/C114, C117/C135, and C138/C149. N105 carries an N-linked (GlcNAc...) asparagine glycan. One copy of the TNFR-Cys 3; truncated repeat lies at 116-149 (DCLPGFYRKTKLVGFQDMECVPCGDPPPPYEPHC). Residues 171-191 (AAVICSALATVLLALLILCVI) traverse the membrane as a helical segment. Residues 192 to 416 (YCKRQFMEKK…LAMPTAFQDA (225 aa)) are Cytoplasmic-facing. Residues 321-416 (LCDSYPELTG…LAMPTAFQDA (96 aa)) form a disordered region. 3 stretches are compositionally biased toward polar residues: residues 331–351 (EDTNSLNPENESAASLDSSGG), 360–370 (LESSGNVSEST), and 381–396 (VWEQTLAQDAQRTPSQ).

In terms of assembly, associates with TRAF1, TRAF2, TRAF3 and TRAF5. Interacts with LINGO1. Highly expressed in adult brain, and in embryos from day 11-17, but not earlier. Detected in embryonic brain and epithelium, and at lower levels in adult heart, lung and liver. In neonatal mice, mainly in hair follicles and neuron-like cells in the cerebellum, but not in the skin epidermis. Isoform 3 was found in embryonic day 17.5 skin but not in brain and liver.

It localises to the cell membrane. Its subcellular location is the secreted. In terms of biological role, can mediate activation of c-Jun and NF-kappa-B. May promote caspase-independent cell death. Isoform 2 and isoform 3 may act as decoy receptors. The sequence is that of Tumor necrosis factor receptor superfamily member 19 (Tnfrsf19) from Mus musculus (Mouse).